The chain runs to 1023 residues: FHIP family protein AGAP011705 (1023 aa).

Polar residues-rich tracts occupy residues 1-13 (MSWLRSSPLRQSF), 806-825 (SMTSSLSQTTPMQLTPSSSY), and 868-888 (GLNHSPNGRQQPQSYTPASMN). 2 disordered regions span residues 1 to 39 (MSWLRSSPLRQSFSKSGNNSNSNGGGSANDRSRSGAGGG) and 797 to 927 (GKLL…AETQ). A compositionally biased stretch (low complexity) spans 889-906 (VPSPVGQQQHQHQSVSSV).

It belongs to the FHIP family.

The polypeptide is FHIP family protein AGAP011705 (Anopheles gambiae (African malaria mosquito)).